The sequence spans 477 residues: Aspartyl/glutamyl-tRNA(Asn/Gln) amidotransferase subunit B (477 aa).

This sequence belongs to the GatB/GatE family. GatB subfamily. In terms of assembly, heterotrimer of A, B and C subunits.

The enzyme catalyses L-glutamyl-tRNA(Gln) + L-glutamine + ATP + H2O = L-glutaminyl-tRNA(Gln) + L-glutamate + ADP + phosphate + H(+). The catalysed reaction is L-aspartyl-tRNA(Asn) + L-glutamine + ATP + H2O = L-asparaginyl-tRNA(Asn) + L-glutamate + ADP + phosphate + 2 H(+). Its function is as follows. Allows the formation of correctly charged Asn-tRNA(Asn) or Gln-tRNA(Gln) through the transamidation of misacylated Asp-tRNA(Asn) or Glu-tRNA(Gln) in organisms which lack either or both of asparaginyl-tRNA or glutaminyl-tRNA synthetases. The reaction takes place in the presence of glutamine and ATP through an activated phospho-Asp-tRNA(Asn) or phospho-Glu-tRNA(Gln). This chain is Aspartyl/glutamyl-tRNA(Asn/Gln) amidotransferase subunit B, found in Coxiella burnetii (strain RSA 493 / Nine Mile phase I).